Here is a 152-residue protein sequence, read N- to C-terminus: S-protein homolog 4 (152 aa).

The N-terminal stretch at 1–23 is a signal peptide; it reads MTTMLKTQVHVVVIYLLIQIAFS. A glycan (N-linked (GlcNAc...) asparagine) is linked at asparagine 71.

This sequence belongs to the plant self-incompatibility (S1) protein family.

It localises to the secreted. The sequence is that of S-protein homolog 4 from Arabidopsis thaliana (Mouse-ear cress).